Here is a 453-residue protein sequence, read N- to C-terminus: Presenilin-like protein At1g08700 (453 aa).

Topologically, residues 1–8 are cytoplasmic; it reads MESSILDS. The chain crosses the membrane as a helical span at residues 9-29; the sequence is LGVEIIGVMAPVSICMFLVVL. Over 30 to 68 the chain is Lumenal; that stretch reads LTYSLSVTSDPQIRSAANLIYIENPSDSTTVKLEGSLAN. The helical transmembrane segment at 69 to 89 threads the bilayer; it reads AIVFVVLIAAVTFILVLLFYY. The Cytoplasmic segment spans residues 90-103; it reads NFTNFLKHYMRFSA. A helical membrane pass occupies residues 104-124; it reads FFVLGTMGGAIFLSIIQHFSI. Topologically, residues 125–132 are lumenal; sequence PVDSITCF. Residues 133 to 153 form a helical membrane-spanning segment; that stretch reads ILLFNFTILGTLSVFAGGIPI. Topologically, residues 154–159 are cytoplasmic; it reads VLRQCY. The next 2 helical transmembrane spans lie at 160–180 and 181–201; these read MVVM…WTTW and FILV…GGPL. The active site involves Asp-190. Topologically, residues 202–369 are cytoplasmic; the sequence is KLLVELASSR…VVDISNRGIK (168 aa). 2 disordered regions span residues 226–248 and 292–329; these read VSSG…GGGV and IGNG…DRES. The span at 227 to 240 shows a compositional bias: low complexity; the sequence is SSGNQRRNRGSSLR. The residue at position 296 (Ser-296) is a Phosphoserine. Residues 309 to 320 show a composition bias toward polar residues; sequence PSASEHSTSVGT. The chain crosses the membrane as a helical span at residues 370-390; the sequence is LGLGDFIFYSVLVGRAAMYDL. The active site involves Asp-374. At 391–392 the chain is on the lumenal side; sequence MT. A helical transmembrane segment spans residues 393–413; that stretch reads VYACYLAIISGLGCTLILLSV. The Cytoplasmic segment spans residues 414–417; sequence YNRA. The segment at residues 418-438 is an intramembrane region (helical); that stretch reads LPALPISIMLGVVFYFLTRLL. The PAL motif lies at 419–421; sequence PAL. Residues 439-453 lie on the Cytoplasmic side of the membrane; the sequence is MEPFVVGVTTNLMMF.

Belongs to the peptidase A22A family. In terms of assembly, homodimer. Probable component of the gamma-secretase complex, a complex composed of a presenilin homodimer, nicastrin, APH1 and PEN2.

It localises to the endoplasmic reticulum membrane. The protein resides in the golgi apparatus membrane. In terms of biological role, probable subunit of the gamma-secretase complex, an endoprotease complex that catalyzes the intramembrane cleavage of integral membrane proteins such as Notch receptors. This Arabidopsis thaliana (Mouse-ear cress) protein is Presenilin-like protein At1g08700.